The chain runs to 237 residues: Proteasome subunit beta type-1-B (237 aa).

Belongs to the peptidase T1B family. The 26S proteasome consists of a 20S proteasome core and two 19S regulatory subunits. The 20S proteasome core is composed of 28 subunits that are arranged in four stacked rings, resulting in a barrel-shaped structure. The two end rings are each formed by seven alpha subunits, and the two central rings are each formed by seven beta subunits. The catalytic chamber with the active sites is on the inside of the barrel.

The protein resides in the cytoplasm. It is found in the nucleus. Functionally, non-catalytic component of the proteasome, a multicatalytic proteinase complex which is characterized by its ability to cleave peptides with Arg, Phe, Tyr, Leu, and Glu adjacent to the leaving group at neutral or slightly basic pH. The proteasome has an ATP-dependent proteolytic activity. The polypeptide is Proteasome subunit beta type-1-B (psmb1-B) (Carassius auratus (Goldfish)).